Consider the following 248-residue polypeptide: Metallo-beta-lactamase type 2 (248 aa).

An N-terminal signal peptide occupies residues 1-21 (MKRLKGLLVLALGFTGLQVFG). The Zn(2+) site is built by H97, H99, D101, H160, and C179. K182 provides a ligand contact to substrate. A Zn(2+)-binding site is contributed by H221.

This sequence belongs to the metallo-beta-lactamase superfamily. Class-B beta-lactamase family. Monomer. Zn(2+) serves as cofactor.

It is found in the periplasm. It catalyses the reaction a beta-lactam + H2O = a substituted beta-amino acid. Functionally, confers resistance to the different beta-lactams antibiotics (penicillin, cephalosporin and carbapenem) via the hydrolysis of the beta-lactam ring. The chain is Metallo-beta-lactamase type 2 (blaB6) from Elizabethkingia meningoseptica (Chryseobacterium meningosepticum).